The sequence spans 294 residues: 4-hydroxy-tetrahydrodipicolinate synthase (294 aa).

Thr-45 is a pyruvate binding site. Tyr-133 functions as the Proton donor/acceptor in the catalytic mechanism. Lys-162 (schiff-base intermediate with substrate) is an active-site residue. Residue Ile-204 coordinates pyruvate.

It belongs to the DapA family. Homotetramer; dimer of dimers.

The protein resides in the cytoplasm. The catalysed reaction is L-aspartate 4-semialdehyde + pyruvate = (2S,4S)-4-hydroxy-2,3,4,5-tetrahydrodipicolinate + H2O + H(+). It functions in the pathway amino-acid biosynthesis; L-lysine biosynthesis via DAP pathway; (S)-tetrahydrodipicolinate from L-aspartate: step 3/4. Catalyzes the condensation of (S)-aspartate-beta-semialdehyde [(S)-ASA] and pyruvate to 4-hydroxy-tetrahydrodipicolinate (HTPA). In Rhizobium meliloti (strain 1021) (Ensifer meliloti), this protein is 4-hydroxy-tetrahydrodipicolinate synthase.